Reading from the N-terminus, the 97-residue chain is Co-chaperonin GroES (97 aa).

The protein belongs to the GroES chaperonin family. As to quaternary structure, heptamer of 7 subunits arranged in a ring. Interacts with the chaperonin GroEL.

The protein localises to the cytoplasm. In terms of biological role, together with the chaperonin GroEL, plays an essential role in assisting protein folding. The GroEL-GroES system forms a nano-cage that allows encapsulation of the non-native substrate proteins and provides a physical environment optimized to promote and accelerate protein folding. GroES binds to the apical surface of the GroEL ring, thereby capping the opening of the GroEL channel. The sequence is that of Co-chaperonin GroES from Symbiobacterium thermophilum (strain DSM 24528 / JCM 14929 / IAM 14863 / T).